The chain runs to 171 residues: Large ribosomal subunit protein uL10 (171 aa).

This sequence belongs to the universal ribosomal protein uL10 family. As to quaternary structure, part of the ribosomal stalk of the 50S ribosomal subunit. The N-terminus interacts with L11 and the large rRNA to form the base of the stalk. The C-terminus forms an elongated spine to which L12 dimers bind in a sequential fashion forming a multimeric L10(L12)X complex.

Forms part of the ribosomal stalk, playing a central role in the interaction of the ribosome with GTP-bound translation factors. The protein is Large ribosomal subunit protein uL10 of Paracoccus denitrificans (strain Pd 1222).